The chain runs to 65 residues: Keratin-associated protein 20-2 (65 aa).

This sequence belongs to the KRTAP type 20 family. In terms of assembly, interacts with hair keratins.

Functionally, in the hair cortex, hair keratin intermediate filaments are embedded in an interfilamentous matrix, consisting of hair keratin-associated proteins (KRTAP), which are essential for the formation of a rigid and resistant hair shaft through their extensive disulfide bond cross-linking with abundant cysteine residues of hair keratins. The matrix proteins include the high-sulfur and high-glycine-tyrosine keratins. This is Keratin-associated protein 20-2 (KRTAP20-2) from Homo sapiens (Human).